Consider the following 330-residue polypeptide: ADP-L-glycero-D-manno-heptose-6-epimerase (330 aa).

NADP(+) is bound by residues phenylalanine 11–isoleucine 12, aspartate 32–asparagine 33, lysine 39, lysine 54, glutamate 75–serine 79, and asparagine 92. The active-site Proton acceptor is tyrosine 139. Lysine 143 provides a ligand contact to NADP(+). Position 168 (asparagine 168) interacts with substrate. Residues valine 169 and lysine 177 each coordinate NADP(+). Lysine 177 functions as the Proton acceptor in the catalytic mechanism. Residues arginine 179, histidine 186, phenylalanine 200 to tyrosine 203, arginine 213, and tyrosine 292 each bind substrate.

Belongs to the NAD(P)-dependent epimerase/dehydratase family. HldD subfamily. In terms of assembly, homopentamer. Requires NADP(+) as cofactor.

It catalyses the reaction ADP-D-glycero-beta-D-manno-heptose = ADP-L-glycero-beta-D-manno-heptose. It participates in nucleotide-sugar biosynthesis; ADP-L-glycero-beta-D-manno-heptose biosynthesis; ADP-L-glycero-beta-D-manno-heptose from D-glycero-beta-D-manno-heptose 7-phosphate: step 4/4. In terms of biological role, catalyzes the interconversion between ADP-D-glycero-beta-D-manno-heptose and ADP-L-glycero-beta-D-manno-heptose via an epimerization at carbon 6 of the heptose. The sequence is that of ADP-L-glycero-D-manno-heptose-6-epimerase from Burkholderia vietnamiensis (strain G4 / LMG 22486) (Burkholderia cepacia (strain R1808)).